The sequence spans 308 residues: Acetaldehyde dehydrogenase (308 aa).

25 to 28 (TGAI) contacts NAD(+). The active-site Acyl-thioester intermediate is Cys139. Asn279 is a binding site for NAD(+).

It belongs to the acetaldehyde dehydrogenase family.

It catalyses the reaction acetaldehyde + NAD(+) + CoA = acetyl-CoA + NADH + H(+). The chain is Acetaldehyde dehydrogenase from Streptomyces griseus subsp. griseus (strain JCM 4626 / CBS 651.72 / NBRC 13350 / KCC S-0626 / ISP 5235).